Consider the following 883-residue polypeptide: Pyruvate, phosphate dikinase 2 (883 aa).

The interval methionine 1 to serine 21 is disordered. The active-site Tele-phosphohistidine intermediate is histidine 465. Substrate contacts are provided by arginine 571, arginine 628, glutamate 757, glycine 778, threonine 779, asparagine 780, and aspartate 781. A Mg(2+)-binding site is contributed by glutamate 757. Aspartate 781 is a binding site for Mg(2+). The Proton donor role is filled by cysteine 843.

It belongs to the PEP-utilizing enzyme family. Mg(2+) is required as a cofactor. In terms of tissue distribution, expressed in leaves, roots and stems.

The protein localises to the cytoplasm. It carries out the reaction pyruvate + phosphate + ATP = phosphoenolpyruvate + AMP + diphosphate + H(+). Its function is as follows. Formation of phosphoenolpyruvate, which is the primary acceptor of CO(2) in C4 and some Crassulacean acid metabolism plants. The chain is Pyruvate, phosphate dikinase 2 from Zea mays (Maize).